Here is a 215-residue protein sequence, read N- to C-terminus: Glutathione S-transferase F9 (215 aa).

The 80-residue stretch at 2 to 81 (VLKVYGPHFA…YVAEKYRSQG (80 aa)) folds into the GST N-terminal domain. 11-12 (AS) provides a ligand contact to glutathione. Serine 12 carries the phosphoserine modification. Methionine 35 is subject to Methionine sulfoxide. Glutathione-binding positions include 39 to 40 (HK), 52 to 53 (TV), and 65 to 66 (ES). Residues 88-215 (TVEDRGQVEQ…ETVAKYSFPA (128 aa)) form the GST C-terminal domain. Methionine 118, methionine 123, and methionine 184 each carry methionine sulfoxide.

Belongs to the GST superfamily. Phi family. Oxidated at Met-35, Met-118, Met-123 and Met-184 in oxidative stress conditions (e.g. hydrogen peroxide H(2)O(2)).

It localises to the cytoplasm. Its subcellular location is the cytosol. It carries out the reaction RX + glutathione = an S-substituted glutathione + a halide anion + H(+). With respect to regulation, redox-regulated enzyme; in oxidative stress conditions methionine oxidation ensure a thermodynamic and structural compensatory mechanism to guarantee H(2)O(2) peroxidase activity despite transferase activity inhibition. Functionally, in vitro, possesses glutathione S-transferase activity toward 1-chloro-2,4-dinitrobenzene (CDNB) and benzyl isothiocyanate (BITC), and glutathione peroxidase activity toward cumene hydroperoxide and linoleic acid-13-hydroperoxide. May be involved in the conjugation of reduced glutathione to a wide number of exogenous and endogenous hydrophobic electrophiles and have a detoxification role against certain herbicides. This chain is Glutathione S-transferase F9, found in Arabidopsis thaliana (Mouse-ear cress).